A 147-amino-acid chain; its full sequence is Male-specific protein scotti (147 aa).

The segment at 57 to 76 is disordered; it reads EPPLGVFPAQGGPNGPPRLR. N-linked (GlcNAc...) asparagine glycosylation is present at Asn-128.

This sequence belongs to the male-specific scotti family.

Post-meiotically transcribed gene that has a role in late spermiogenesis; required for actin cone progression during spermatid individualization. The chain is Male-specific protein scotti from Drosophila simulans (Fruit fly).